A 574-amino-acid polypeptide reads, in one-letter code: Zinc finger and BTB domain-containing protein 3 (574 aa).

Positions 74 to 142 (CDCTVMVGST…MYAGQLTLRG (69 aa)) constitute a BTB domain. Disordered regions lie at residues 175–277 (AEAD…SSTE) and 305–346 (SLRV…APAP). Residues lysine 181 and lysine 182 each participate in a glycyl lysine isopeptide (Lys-Gly) (interchain with G-Cter in SUMO2) cross-link. Residues 187–212 (NSQLPSLEFLSSTSRGTQPSLASAET) are compositionally biased toward polar residues. Low complexity predominate over residues 323–334 (PPASAPTSAPAP). Phosphoserine is present on serine 362. The interval 364–403 (EETDVSDEQPQGPERAFPSGGAVYGAQPSQPEAFEDPGAA) is disordered. C2H2-type zinc fingers lie at residues 472-494 (PTCKTCGKTFSCSYTLRRHATVH) and 500-523 (YECRYCLRSYTQSGDLYRHIRKAH). The span at 526–535 (DLAKRSKPDP) shows a compositional bias: basic and acidic residues. The tract at residues 526–574 (DLAKRSKPDPEVGPLLGVQPLPGSPTADRQSSSGGGPPKDFVLAPKTNI) is disordered. A Glycyl lysine isopeptide (Lys-Gly) (interchain with G-Cter in SUMO2) cross-link involves residue lysine 532. The residue at position 549 (serine 549) is a Phosphoserine.

It is found in the nucleus. Functionally, may be involved in transcriptional regulation. The protein is Zinc finger and BTB domain-containing protein 3 (ZBTB3) of Homo sapiens (Human).